A 302-amino-acid chain; its full sequence is MQDLLNQILDEVRPLIGQGQVANYIPALADVPANQLGIAVYGNDGQVFSAGDADTPFSVQSISKVFSLVQAIGHSGEAIWERLGHEPSGQPFNSLVQLEFERGRPRNPFINAGALVICDINQSRFAAPALSMRDFVRRLSGNLQVMVDGRVAESEYQHRARNAAMAYLMQSFGNFHNDVEAVLRSYFSHCALRMSCVDLARAFCFLANDGFCKHSGEQILTRRQTQQVNSIMATSGLYDEAGNFAYRVGLPGKSGVGGGIVAVVPGQFTVCVWSPELNSAGNSLVGMAALELLSQRIGWSVF.

Residues Ser61, Asn111, Glu155, Asn162, Tyr186, Tyr238, and Val256 each coordinate substrate.

It belongs to the glutaminase family. Homotetramer.

The enzyme catalyses L-glutamine + H2O = L-glutamate + NH4(+). This Pseudomonas fluorescens (strain ATCC BAA-477 / NRRL B-23932 / Pf-5) protein is Glutaminase.